Consider the following 467-residue polypeptide: MEKISRTKIVDLLKRRDFGAMVNVKGWVRTRRGSKQVNFIALNDGSTINNVQIVVDLANFDEEMLKQITTGACISVNGELTESIGSGQAAEVQARGIEVLGTCDNTYPLQKKGHTMEFLREIAHLRPRTNTFGAVFRIRHNMAIAIHKFFHERGFFYFHTPIITASDCEGAGQMFQVTTKNLYDLKKDENGAIIYDDDFFGKQASLTVSGQLEGELAATALGAIYTFGPTFRAENSNTPRHLAEFWMIEPEVAFNDITDNMDLAEDFIKYCVQWALDNCYDDVKFLNDMFDKGLIERLQGVLKEEFVRLPYTEGIKILEEAVVKGHKFEFPVYWGVDLASEHERYLVEEHFKRPVILTDYPKEIKAFYMKQNEDGKTVRAMDVLFPKIGEIIGGSEREADYDKLMTRIQELGIPMKDMWWYLDTRKFGSCPHSGFGLGFERLLLFVTGMTNIRDVIPFPRTPRNAEF.

Belongs to the class-II aminoacyl-tRNA synthetase family. In terms of assembly, homodimer.

The protein localises to the cytoplasm. It catalyses the reaction tRNA(Asn) + L-asparagine + ATP = L-asparaginyl-tRNA(Asn) + AMP + diphosphate + H(+). The sequence is that of Asparagine--tRNA ligase from Phocaeicola vulgatus (strain ATCC 8482 / DSM 1447 / JCM 5826 / CCUG 4940 / NBRC 14291 / NCTC 11154) (Bacteroides vulgatus).